Here is a 363-residue protein sequence, read N- to C-terminus: Histidinol-phosphate aminotransferase (363 aa).

Residue Lys227 is modified to N6-(pyridoxal phosphate)lysine.

Belongs to the class-II pyridoxal-phosphate-dependent aminotransferase family. Histidinol-phosphate aminotransferase subfamily. Homodimer. The cofactor is pyridoxal 5'-phosphate.

The catalysed reaction is L-histidinol phosphate + 2-oxoglutarate = 3-(imidazol-4-yl)-2-oxopropyl phosphate + L-glutamate. The protein operates within amino-acid biosynthesis; L-histidine biosynthesis; L-histidine from 5-phospho-alpha-D-ribose 1-diphosphate: step 7/9. The protein is Histidinol-phosphate aminotransferase of Akkermansia muciniphila (strain ATCC BAA-835 / DSM 22959 / JCM 33894 / BCRC 81048 / CCUG 64013 / CIP 107961 / Muc).